We begin with the raw amino-acid sequence, 159 residues long: Probable chemoreceptor glutamine deamidase CheD 2 (159 aa).

Belongs to the CheD family.

The enzyme catalyses L-glutaminyl-[protein] + H2O = L-glutamyl-[protein] + NH4(+). Probably deamidates glutamine residues to glutamate on methyl-accepting chemotaxis receptors (MCPs), playing an important role in chemotaxis. The sequence is that of Probable chemoreceptor glutamine deamidase CheD 2 from Anaeromyxobacter dehalogenans (strain 2CP-C).